Reading from the N-terminus, the 450-residue chain is MKVVISNKAYFKPDDELWDYCSKQTTYHIETMTSKYPIMYKNSGVVAKEIKWIPITRLDLLDAKGIKYELVDKRTLAPVDIPKPKFKLREEDQLPIYEECDDTCIINGKPGFGKTILALALAYKFGQKTLVICTNTSIREMWAAEVRKWFGFEPGIIGSGKYNIDPPIVVSNIQTVNKHANNLSKVFGTVIVDEVHHCVATTFTNFLEISCARYKIGLSGTLKRKDGLQVMFKDFFGYKIFSPPVNNTVAPTIHRYSVPVELSGNQNVPWALRANDVYNHPEYRETIINLAHLYVNMGHKVLIVSDRTELIQTILEALTQRGVTTYEIIGATHLDDRLKIQEDIAKGGPCVLAAAQSIFSEGISLNELSCLIMGSLINNESLIEQLAGRVQRIVEGKLDPIVVDLIMKGGTGLRQASGRMAVYRNNGWKTITMTPEKAVQLAKIAFGNSS.

The 146-residue stretch at 95–240 folds into the Helicase ATP-binding domain; the sequence is PIYEECDDTC…MFKDFFGYKI (146 aa). 108 to 115 serves as a coordination point for ATP; that stretch reads GKPGFGKT. The DEAH box motif lies at 193–196; sequence DEVH. The region spanning 289–439 is the Helicase C-terminal domain; that stretch reads NLAHLYVNMG…TITMTPEKAV (151 aa).

The enzyme catalyses ATP + H2O = ADP + phosphate + H(+). In Escherichia phage T5 (Enterobacteria phage T5), this protein is Probable helicase D10 (D10).